We begin with the raw amino-acid sequence, 302 residues long: O-antigen biosynthesis glycosyltransferase WbnK (302 aa).

Belongs to the glycosyltransferase 11 family.

It carries out the reaction beta-D-Gal-(1-&gt;3)-alpha-D-GalNAc-(1-&gt;3)-alpha-D-GalNAc-di-trans,octa-cis-undecaprenyl diphosphate + GDP-beta-L-fucose = alpha-L-Fuc-(1-&gt;2)-beta-D-Gal-(1-&gt;3)-alpha-D-GalNAc-(1-&gt;3)-alpha-D-GalNAc-di-trans,octa-cis-undecaprenyl diphosphate + GDP + H(+). The protein operates within bacterial outer membrane biogenesis; LPS O-antigen biosynthesis. Its function is as follows. Involved in the assembly of the O-repeating unit during O-antigen biosynthesis. The protein is O-antigen biosynthesis glycosyltransferase WbnK of Escherichia coli.